Consider the following 395-residue polypeptide: MATVDRWLLPDGIEEVLPPEAARIEIARRQVLDLFQSWGYELVVTPHIEYLESLLTGAGQDLDQRTFKVVDPQSGRLMGFRADFTPQVARIDAHTLRREGPSRLCYAGSVLHAQPRALSTSRSPIQLGAELYGDASPTSDVEVISLMLATLQLTDVPDVHMDLGHVGIYRGLARAANLSGDVEQQLFDALQRKAVDEVQTLTADLPKDLGNMLRALVELCGGREVLAEARVRLGRAPASVLAALDDLLAIADRLASRYPDLPLYFDLGELRGYHYHTGVVFAVFVPGEGQSIAQGGRYDDIGADFGRARPATGFSTDLKTLVTLGRAEVVLPAGGIWMPDSSDAALWQHVCQLRNEGQRVVQALPGQPLSAALEADCDRQLIQQDGRWQVLPLTH.

Belongs to the class-II aminoacyl-tRNA synthetase family. HisZ subfamily. In terms of assembly, heteromultimer composed of HisG and HisZ subunits.

The protein resides in the cytoplasm. The protein operates within amino-acid biosynthesis; L-histidine biosynthesis; L-histidine from 5-phospho-alpha-D-ribose 1-diphosphate: step 1/9. Required for the first step of histidine biosynthesis. May allow the feedback regulation of ATP phosphoribosyltransferase activity by histidine. The chain is ATP phosphoribosyltransferase regulatory subunit from Pseudomonas entomophila (strain L48).